Here is a 356-residue protein sequence, read N- to C-terminus: Stomatin-like protein 2, mitochondrial (356 aa).

A mitochondrion-targeting transit peptide spans methionine 1 to alanine 28. Phosphoserine; by PKC/PRKCZ is present on serine 17. At tyrosine 124 the chain carries Phosphotyrosine. Position 145 is an N6-acetyllysine; alternate (lysine 145). Lysine 145 bears the N6-succinyllysine; alternate mark. Residues isoleucine 215–lysine 252 are a coiled coil. Lysine 233 bears the N6-acetyllysine mark. Residues lysine 321–serine 356 are disordered. Threonine 327 bears the Phosphothreonine mark. Positions aspartate 329–aspartate 343 are enriched in polar residues. Serine 330 is subject to Phosphoserine.

Belongs to the band 7/mec-2 family. In terms of assembly, forms homooligomers. Interacts with MFN2; may form heterooligomers. Interacts with CACNA2D2. Interacts with PHB1 and PHB2; recruits them to cardiolipin-enriched mitochondrial membranes and stabilizes them. In terms of processing, hyperphosphorylated at Ser-17 in some patients with monoclonal gammopathy of undetermined significance (MGUS), multiple myeloma (MM) and Waldenstrom macroglobulinemia due to impaired dephosphorylation by PP2A. As to expression, ubiquitously expressed at low levels. Expressed in lymphoid tissues (at protein level).

It is found in the cell membrane. The protein localises to the mitochondrion. Its subcellular location is the mitochondrion inner membrane. The protein resides in the mitochondrion intermembrane space. It localises to the membrane raft. It is found in the cytoplasm. The protein localises to the cytoskeleton. Mitochondrial protein that probably regulates the biogenesis and the activity of mitochondria. Stimulates cardiolipin biosynthesis, binds cardiolipin-enriched membranes where it recruits and stabilizes some proteins including prohibitin and may therefore act in the organization of functional microdomains in mitochondrial membranes. Through regulation of the mitochondrial function may play a role into several biological processes including cell migration, cell proliferation, T-cell activation, calcium homeostasis and cellular response to stress. May play a role in calcium homeostasis through negative regulation of calcium efflux from mitochondria. Required for mitochondrial hyperfusion a pro-survival cellular response to stress which results in increased ATP production by mitochondria. May also regulate the organization of functional domains at the plasma membrane and play a role in T-cell activation through association with the T-cell receptor signaling complex and its regulation. The polypeptide is Stomatin-like protein 2, mitochondrial (STOML2) (Homo sapiens (Human)).